Reading from the N-terminus, the 537-residue chain is Ribonuclease Y (537 aa).

The helical transmembrane segment at 4–24 (FPIIMSVFAAIIGLVIGYVSV) threads the bilayer. Residues 112–148 (ASTLDRKDDNLSNKEKALEQKEQSLSDKSKHIDAREE) are disordered. In terms of domain architecture, KH spans 227 to 287 (TNSTVHLPDD…IRREIARMTM (61 aa)). The 94-residue stretch at 353–446 (VLRHSIEVAK…VAAADALSAA (94 aa)) folds into the HD domain.

The protein belongs to the RNase Y family.

It is found in the cell membrane. Its function is as follows. Endoribonuclease that initiates mRNA decay. The protein is Ribonuclease Y of Streptococcus sanguinis (strain SK36).